The primary structure comprises 55 residues: Large ribosomal subunit protein bL33 (55 aa).

Belongs to the bacterial ribosomal protein bL33 family.

The chain is Large ribosomal subunit protein bL33 from Bartonella quintana (strain Toulouse) (Rochalimaea quintana).